The sequence spans 175 residues: Cytidylate kinase (175 aa).

7 to 15 (GQPGSGKTS) serves as a coordination point for ATP.

Belongs to the cytidylate kinase family. Type 2 subfamily.

It is found in the cytoplasm. It catalyses the reaction CMP + ATP = CDP + ADP. It carries out the reaction dCMP + ATP = dCDP + ADP. This chain is Cytidylate kinase, found in Methanocella arvoryzae (strain DSM 22066 / NBRC 105507 / MRE50).